A 314-amino-acid chain; its full sequence is R2-like ligand binding oxidase (314 aa).

Glu-68, Glu-101, and His-104 together coordinate Mn(2+). The segment at residues 71–162 (VTEDIQPFMS…AAQVRASVTY (92 aa)) is a cross-link (3-(O4'-tyrosyl)-valine (Val-Tyr)). Position 101 (Glu-101) interacts with Fe cation. Residues Glu-167, Glu-202, and His-205 each contribute to the Fe cation site.

The protein belongs to the ribonucleoside diphosphate reductase small chain family. R2-like ligand binding oxidase subfamily. In terms of assembly, homodimer. Requires Fe cation as cofactor. The cofactor is Mn(2+).

In terms of biological role, probable oxidase that might be involved in lipid metabolism. This Mycobacterium tuberculosis (strain ATCC 25177 / H37Ra) protein is R2-like ligand binding oxidase.